The chain runs to 195 residues: Imidazoleglycerol-phosphate dehydratase (195 aa).

The protein belongs to the imidazoleglycerol-phosphate dehydratase family.

It localises to the cytoplasm. It carries out the reaction D-erythro-1-(imidazol-4-yl)glycerol 3-phosphate = 3-(imidazol-4-yl)-2-oxopropyl phosphate + H2O. The protein operates within amino-acid biosynthesis; L-histidine biosynthesis; L-histidine from 5-phospho-alpha-D-ribose 1-diphosphate: step 6/9. The polypeptide is Imidazoleglycerol-phosphate dehydratase (Burkholderia vietnamiensis (strain G4 / LMG 22486) (Burkholderia cepacia (strain R1808))).